The chain runs to 250 residues: tRNA (guanine-N(1)-)-methyltransferase (250 aa).

S-adenosyl-L-methionine contacts are provided by residues Gly116 and 136–141 (IGDYVL).

It belongs to the RNA methyltransferase TrmD family. As to quaternary structure, homodimer.

The protein localises to the cytoplasm. The catalysed reaction is guanosine(37) in tRNA + S-adenosyl-L-methionine = N(1)-methylguanosine(37) in tRNA + S-adenosyl-L-homocysteine + H(+). Its function is as follows. Specifically methylates guanosine-37 in various tRNAs. This chain is tRNA (guanine-N(1)-)-methyltransferase, found in Pseudomonas fluorescens (strain ATCC BAA-477 / NRRL B-23932 / Pf-5).